The sequence spans 574 residues: Cholinesterase (574 aa).

Asparagine 57 carries an N-linked (GlcNAc...) asparagine glycan. Cysteine 65 and cysteine 92 are oxidised to a cystine. Asparagine 106 carries N-linked (GlcNAc...) asparagine glycosylation. 116-117 is a substrate binding site; it reads GG. Residue serine 198 is the Acyl-ester intermediate of the active site. At serine 198 the chain carries Phosphoserine. Residues asparagine 241 and asparagine 256 are each glycosylated (N-linked (GlcNAc...) asparagine). A disulfide bridge links cysteine 252 with cysteine 263. Glutamate 325 (charge relay system) is an active-site residue. N-linked (GlcNAc...) asparagine glycosylation is present at asparagine 341. A disulfide bridge connects residues cysteine 400 and cysteine 519. Histidine 438 serves as the catalytic Charge relay system. 3 N-linked (GlcNAc...) asparagine glycosylation sites follow: asparagine 455, asparagine 481, and asparagine 486.

Belongs to the type-B carboxylesterase/lipase family. As to quaternary structure, homotetramer; disulfide-linked. Dimer of dimers. In terms of tissue distribution, detected in blood plasma (at protein level). Present in most cells except erythrocytes.

The protein resides in the secreted. It catalyses the reaction an acylcholine + H2O = a carboxylate + choline + H(+). In terms of biological role, esterase with broad substrate specificity. Contributes to the inactivation of the neurotransmitter acetylcholine. Can degrade neurotoxic organophosphate esters. The sequence is that of Cholinesterase (BCHE) from Equus caballus (Horse).